The sequence spans 157 residues: 2-amino-4-hydroxy-6-hydroxymethyldihydropteridine pyrophosphokinase (157 aa).

Belongs to the HPPK family.

It carries out the reaction 6-hydroxymethyl-7,8-dihydropterin + ATP = (7,8-dihydropterin-6-yl)methyl diphosphate + AMP + H(+). It functions in the pathway cofactor biosynthesis; tetrahydrofolate biosynthesis; 2-amino-4-hydroxy-6-hydroxymethyl-7,8-dihydropteridine diphosphate from 7,8-dihydroneopterin triphosphate: step 4/4. Catalyzes the transfer of pyrophosphate from adenosine triphosphate (ATP) to 6-hydroxymethyl-7,8-dihydropterin, an enzymatic step in folate biosynthesis pathway. The protein is 2-amino-4-hydroxy-6-hydroxymethyldihydropteridine pyrophosphokinase (folK) of Campylobacter jejuni subsp. jejuni serotype O:2 (strain ATCC 700819 / NCTC 11168).